We begin with the raw amino-acid sequence, 167 residues long: Endoribonuclease YbeY (167 aa).

The Zn(2+) site is built by His-131, His-135, and His-141.

This sequence belongs to the endoribonuclease YbeY family. Zn(2+) serves as cofactor.

Its subcellular location is the cytoplasm. Its function is as follows. Single strand-specific metallo-endoribonuclease involved in late-stage 70S ribosome quality control and in maturation of the 3' terminus of the 16S rRNA. This is Endoribonuclease YbeY from Rickettsia prowazekii (strain Madrid E).